Here is an 89-residue protein sequence, read N- to C-terminus: Small ribosomal subunit protein bS20 (89 aa).

A disordered region spans residues 68–89; it reads PNKGARKSSRLDHFVNEQKSKQ. Positions 76–89 are enriched in basic and acidic residues; the sequence is SRLDHFVNEQKSKQ.

The protein belongs to the bacterial ribosomal protein bS20 family.

Functionally, binds directly to 16S ribosomal RNA. The chain is Small ribosomal subunit protein bS20 from Mycoplasmopsis agalactiae (strain NCTC 10123 / CIP 59.7 / PG2) (Mycoplasma agalactiae).